Consider the following 92-residue polypeptide: DNA-directed RNA polymerase subunit Rpo11 (92 aa).

This sequence belongs to the archaeal Rpo11/eukaryotic RPB11/RPC19 RNA polymerase subunit family. In terms of assembly, part of the RNA polymerase complex.

The protein resides in the cytoplasm. The catalysed reaction is RNA(n) + a ribonucleoside 5'-triphosphate = RNA(n+1) + diphosphate. In terms of biological role, DNA-dependent RNA polymerase (RNAP) catalyzes the transcription of DNA into RNA using the four ribonucleoside triphosphates as substrates. This is DNA-directed RNA polymerase subunit Rpo11 from Methanosarcina mazei (strain ATCC BAA-159 / DSM 3647 / Goe1 / Go1 / JCM 11833 / OCM 88) (Methanosarcina frisia).